The chain runs to 494 residues: WD repeat-containing protein 37 (494 aa).

Composition is skewed to polar residues over residues 1–13 (MPTE…TARQ) and 22–31 (SLSIRRTNSS). Residues 1 to 50 (MPTESASCSTARQTKQKRKSHSLSIRRTNSSEQERTGLPRDMLEGQDSKL) form a disordered region. Residues 32–47 (EQERTGLPRDMLEGQD) show a composition bias toward basic and acidic residues. WD repeat units lie at residues 154-194 (GHRD…CLVK) and 197-236 (GHVG…PTPQ). The interval 237–265 (PVADTSISGEDEVECSDKDEPDLDGDVSS) is disordered. Positions 245–263 (GEDEVECSDKDEPDLDGDV) are enriched in acidic residues. 5 WD repeats span residues 279-318 (SHQG…LVHS), 321-360 (GHDQ…IHSV), 365-403 (GHTD…SPIA), 406-445 (RTDS…LARL), and 452-493 (GHRR…LLQE).

Forms homodimers. Interacts with PACS1. Interacts with PACS2.

It localises to the cytoplasm. The protein localises to the nucleus. In terms of biological role, required for normal ER Ca2+ handling in lymphocytes. Together with PACS1, it plays an essential role in stabilizing peripheral lymphocyte populations. In Homo sapiens (Human), this protein is WD repeat-containing protein 37 (WDR37).